Consider the following 284-residue polypeptide: Pantothenate synthetase (284 aa).

Position 31–38 (31–38) interacts with ATP; it reads MGNLHAGH. Catalysis depends on His38, which acts as the Proton donor. Gln62 contacts (R)-pantoate. Gln62 lines the beta-alanine pocket. Residue 150–153 participates in ATP binding; that stretch reads GKKD. Gln156 is a (R)-pantoate binding site. Residues Val179 and 187–190 each bind ATP; that span reads MSSR.

The protein belongs to the pantothenate synthetase family. As to quaternary structure, homodimer.

The protein resides in the cytoplasm. It carries out the reaction (R)-pantoate + beta-alanine + ATP = (R)-pantothenate + AMP + diphosphate + H(+). Its pathway is cofactor biosynthesis; (R)-pantothenate biosynthesis; (R)-pantothenate from (R)-pantoate and beta-alanine: step 1/1. Functionally, catalyzes the condensation of pantoate with beta-alanine in an ATP-dependent reaction via a pantoyl-adenylate intermediate. The polypeptide is Pantothenate synthetase (Xanthomonas campestris pv. campestris (strain 8004)).